The sequence spans 127 residues: Glycine cleavage system H protein (127 aa).

One can recognise a Lipoyl-binding domain in the interval 24–106 (TVTVGITDHA…FEGAWIAKIK (83 aa)). K65 carries the N6-lipoyllysine modification.

Belongs to the GcvH family. In terms of assembly, the glycine cleavage system is composed of four proteins: P, T, L and H. (R)-lipoate is required as a cofactor.

Its function is as follows. The glycine cleavage system catalyzes the degradation of glycine. The H protein shuttles the methylamine group of glycine from the P protein to the T protein. This Marinomonas sp. (strain MWYL1) protein is Glycine cleavage system H protein.